Reading from the N-terminus, the 149-residue chain is Transcriptional repressor NrdR (149 aa).

The segment at 3 to 34 (CPFCSTEETKVIDSRLVSEGYQVRRRRECGNC) is a zinc-finger region. Residues 49–139 (PKVIKNDGTR…VYLSFDDINQ (91 aa)) form the ATP-cone domain.

Belongs to the NrdR family. The cofactor is Zn(2+).

In terms of biological role, negatively regulates transcription of bacterial ribonucleotide reductase nrd genes and operons by binding to NrdR-boxes. The polypeptide is Transcriptional repressor NrdR (Pasteurella multocida (strain Pm70)).